We begin with the raw amino-acid sequence, 286 residues long: Phosphatidylglycerol--prolipoprotein diacylglyceryl transferase (286 aa).

A run of 4 helical transmembrane segments spans residues Trp25–Leu45, Phe65–Tyr85, Gly103–Trp123, and Val127–Gly147. Arg148 contributes to the a 1,2-diacyl-sn-glycero-3-phospho-(1'-sn-glycerol) binding site. 3 helical membrane passes run Ala188–Leu208, Gly212–Phe232, and Met248–Trp268.

It belongs to the Lgt family.

The protein resides in the cell inner membrane. It catalyses the reaction L-cysteinyl-[prolipoprotein] + a 1,2-diacyl-sn-glycero-3-phospho-(1'-sn-glycerol) = an S-1,2-diacyl-sn-glyceryl-L-cysteinyl-[prolipoprotein] + sn-glycerol 1-phosphate + H(+). The protein operates within protein modification; lipoprotein biosynthesis (diacylglyceryl transfer). Catalyzes the transfer of the diacylglyceryl group from phosphatidylglycerol to the sulfhydryl group of the N-terminal cysteine of a prolipoprotein, the first step in the formation of mature lipoproteins. In Rhodopseudomonas palustris (strain ATCC BAA-98 / CGA009), this protein is Phosphatidylglycerol--prolipoprotein diacylglyceryl transferase.